We begin with the raw amino-acid sequence, 278 residues long: Probable cytochrome c oxidase subunit 3 (278 aa).

6 helical membrane-spanning segments follow: residues 21 to 41 (PWPVLTSFALLLLVIGGVSFM), 46 to 66 (FNIYILSAGVISVGYCLYSWW), 89 to 109 (IGMALFILTEIVFFGVFFASF), 174 to 194 (CVTALALTILLGIFFTTMQAY), 212 to 232 (FYLATGFHGAHVIIGTIFLIV), and 256 to 276 (AWYWHFVDVVWLFLFTFVYIF).

This sequence belongs to the cytochrome c oxidase subunit 3 family.

The protein localises to the cell membrane. The catalysed reaction is 4 Fe(II)-[cytochrome c] + O2 + 8 H(+)(in) = 4 Fe(III)-[cytochrome c] + 2 H2O + 4 H(+)(out). The polypeptide is Probable cytochrome c oxidase subunit 3 (ctaE) (Rickettsia felis (strain ATCC VR-1525 / URRWXCal2) (Rickettsia azadi)).